A 141-amino-acid chain; its full sequence is Large ribosomal subunit protein bL17 (141 aa).

The protein belongs to the bacterial ribosomal protein bL17 family. In terms of assembly, part of the 50S ribosomal subunit. Contacts protein L32.

This Allorhizobium ampelinum (strain ATCC BAA-846 / DSM 112012 / S4) (Agrobacterium vitis (strain S4)) protein is Large ribosomal subunit protein bL17.